The sequence spans 201 residues: Ribonuclease MRP protein subunit RMP1 (201 aa).

The helical transmembrane segment at 86–108 (YWQFNGVIALGQFVTLGCTLVTL) threads the bilayer.

Component of RNase MRP complex which consists of an RNA moiety and at least 10 protein subunits including POP1, POP3, POP4, POP5, POP6, POP7, POP8, RMP1, RPP1 and SNM1, many of which are shared with the RNase P complex.

The protein localises to the membrane. Its subcellular location is the cytoplasm. It localises to the nucleus. In terms of biological role, functions as part of ribonuclease MRP (RNase MRP), which is involved in rRNA processing in mitochondria. In Saccharomyces cerevisiae (strain ATCC 204508 / S288c) (Baker's yeast), this protein is Ribonuclease MRP protein subunit RMP1.